The sequence spans 50 residues: Large ribosomal subunit protein bL32c (50 aa).

Belongs to the bacterial ribosomal protein bL32 family.

The protein localises to the plastid. This chain is Large ribosomal subunit protein bL32c (rpl32), found in Euglena longa (Euglenophycean alga).